Reading from the N-terminus, the 508-residue chain is PTS system mannitol-specific EIICB component (508 aa).

The Cytoplasmic portion of the chain corresponds to 1 to 30 (MSQTETQENKGLGRKVQAFGSFLSSMIMPN). The region spanning 19 to 351 (FGSFLSSMIM…LKFTKEPEED (333 aa)) is the PTS EIIC type-2 domain. The chain crosses the membrane as a helical span at residues 31–52 (IGAFIAWGFIAAIFIDGGWWPN). At 53–56 (KDLS) the chain is on the extracellular side. The helical transmembrane segment at 57 to 77 (ELAGPMISYLIPLLIAYSGGR) threads the bilayer. Topologically, residues 78–141 (LIHEMRGGII…QGFEMLFNNF (64 aa)) are cytoplasmic. The chain crosses the membrane as a helical span at residues 142 to 163 (SAGILGFIMTIVGFKILAPIME). Over 164 to 172 (FIMHILSLA) the chain is Extracellular. Residues 173–193 (VEALVHAHLLPLVSIIVEPAK) form a helical membrane-spanning segment. Residues 194-280 (IVFLNNAINH…VLMRPLLFIA (87 aa)) lie on the Cytoplasmic side of the membrane. A helical transmembrane segment spans residues 281-300 (VILGGMTGVATYSLLDFGFK). At 301–320 (SPASPGSFIVYMLNAPKGEF) the chain is on the extracellular side. Residues 321–342 (LHMVLGVLLAAIVSFIVAALIL) traverse the membrane as a helical segment. The Cytoplasmic segment spans residues 343–508 (KFTKEPEEDL…RYDELLENLK (166 aa)). The disordered stretch occupies residues 355 to 400 (ATEKMEASKGKKSSVSSKLKGNEDNNATSTTASTSTSENNEEQSEE). Residues 367 to 392 (SSVSSKLKGNEDNNATSTTASTSTSE) are compositionally biased toward low complexity. The PTS EIIB type-2 domain maps to 420-508 (NHVIFACDAG…RYDELLENLK (89 aa)). Cys426 acts as the Phosphocysteine intermediate; for EIIB activity in catalysis. A Phosphocysteine; by EIIA modification is found at Cys426.

As to quaternary structure, homodimer.

It localises to the cell membrane. The catalysed reaction is D-mannitol(out) + N(pros)-phospho-L-histidyl-[protein] = D-mannitol 1-phosphate(in) + L-histidyl-[protein]. In terms of biological role, the phosphoenolpyruvate-dependent sugar phosphotransferase system (sugar PTS), a major carbohydrate active transport system, catalyzes the phosphorylation of incoming sugar substrates concomitantly with their translocation across the cell membrane. The enzyme II CmtAB PTS system is involved in D-mannitol transport. This Staphylococcus saprophyticus subsp. saprophyticus (strain ATCC 15305 / DSM 20229 / NCIMB 8711 / NCTC 7292 / S-41) protein is PTS system mannitol-specific EIICB component (mtlA).